Here is a 487-residue protein sequence, read N- to C-terminus: UPF0276 protein SAV_2218 (487 aa).

The interval 1-285 (MVEEGTMERL…LGAIRKTLEK (285 aa)) is UPF0276. The unknown stretch occupies residues 286–487 (AGTRAGASAG…RATRRVLLRR (202 aa)). The interval 319-348 (AGPRRGGADAQAAPRAAGTEALSAASTSTP) is disordered. The segment covering 326–348 (ADAQAAPRAAGTEALSAASTSTP) has biased composition (low complexity).

In the N-terminal section; belongs to the UPF0276 family.

This is UPF0276 protein SAV_2218 from Streptomyces avermitilis (strain ATCC 31267 / DSM 46492 / JCM 5070 / NBRC 14893 / NCIMB 12804 / NRRL 8165 / MA-4680).